The following is a 439-amino-acid chain: Mitochondrial distribution and morphology protein 12 (439 aa).

In terms of domain architecture, SMP-LTD spans 1 to 439; that stretch reads MSIDVNWRFA…VYPSFWTFLI (439 aa). Disordered regions lie at residues 70 to 103, 185 to 274, and 354 to 386; these read YEEDDDDHTSDASEERGEEHSSRWNSTHPELNEP, GWSD…PPRM, and PEQQQQRESAGDDHRPQSRPDSSASASQKRHGG. The span at 78-91 shows a compositional bias: basic and acidic residues; that stretch reads TSDASEERGEEHSS. Residues 215–245 are compositionally biased toward polar residues; the sequence is DTSNSTSRPSTANTLPSHPSGSSKNSGQAAT. 2 stretches are compositionally biased toward basic and acidic residues: residues 247–261 and 362–371; these read RNDHPSLHAGEHLED and SAGDDHRPQS.

This sequence belongs to the MDM12 family. As to quaternary structure, component of the ER-mitochondria encounter structure (ERMES) or MDM complex, composed of mmm1, mdm10, mdm12 and mdm34. A mmm1 homodimer associates with one molecule of mdm12 on each side in a pairwise head-to-tail manner, and the SMP-LTD domains of mmm1 and mdm12 generate a continuous hydrophobic tunnel for phospholipid trafficking.

It is found in the mitochondrion outer membrane. The protein localises to the endoplasmic reticulum membrane. Its function is as follows. Component of the ERMES/MDM complex, which serves as a molecular tether to connect the endoplasmic reticulum (ER) and mitochondria. Components of this complex are involved in the control of mitochondrial shape and protein biogenesis, and function in nonvesicular lipid trafficking between the ER and mitochondria. Mdm12 is required for the interaction of the ER-resident membrane protein mmm1 and the outer mitochondrial membrane-resident beta-barrel protein mdm10. The mdm12-mmm1 subcomplex functions in the major beta-barrel assembly pathway that is responsible for biogenesis of all mitochondrial outer membrane beta-barrel proteins, and acts in a late step after the SAM complex. The mdm10-mdm12-mmm1 subcomplex further acts in the TOM40-specific pathway after the action of the mdm12-mmm1 complex. Essential for establishing and maintaining the structure of mitochondria and maintenance of mtDNA nucleoids. The protein is Mitochondrial distribution and morphology protein 12 of Aspergillus fumigatus (strain CBS 144.89 / FGSC A1163 / CEA10) (Neosartorya fumigata).